Here is a 633-residue protein sequence, read N- to C-terminus: Pentatricopeptide repeat-containing protein At3g24000, mitochondrial (633 aa).

The transit peptide at 1 to 63 (MALRFPPRLL…SYIPADRRFY (63 aa)) directs the protein to the mitochondrion. PPR repeat units follow at residues 94 to 124 (DIVMGNTLLNMYAKCGSLEEARKVFEKMPQR), 125 to 159 (DFVTWTTLISGYSQHDRPCDALLFFNQMLRFGYSP), 160 to 194 (NEFTLSSVIKAAAAERRGCCGHQLHGFCVKCGFDS), 195 to 225 (NVHVGSALLDLYTRYGLMDDAQLVFDALESR), 226 to 260 (NDVSWNALIAGHARRSGTEKALELFQGMLRDGFRP), 261 to 295 (SHFSYASLFGACSSTGFLEQGKWVHAYMIKSGEKL), 296 to 326 (VAFAGNTLLDMYAKSGSIHDARKIFDRLAKR), 327 to 361 (DVVSWNSLLTAYAQHGFGKEAVWWFEEMRRVGIRP), 362 to 396 (NEISFLSVLTACSHSGLLDEGWHYYELMKKDGIVP), and 397 to 431 (EAWHYVTVVDLLGRAGDLNRALRFIEEMPIEPTAA). Residues 432-507 (IWKALLNACR…EPACSWVEIE (76 aa)) form a type E motif region. The tract at residues 508-538 (NAIHMFVANDERHPQREEIARKWEEVLAKIK) is type E(+) motif. The tract at residues 539 to 633 (ELGYVPDTSH…DGNCSCKDYW (95 aa)) is type DYW motif.

Belongs to the PPR family. PCMP-H subfamily.

Its subcellular location is the mitochondrion. The chain is Pentatricopeptide repeat-containing protein At3g24000, mitochondrial (PCMP-H87) from Arabidopsis thaliana (Mouse-ear cress).